A 183-amino-acid polypeptide reads, in one-letter code: Beta-defensin 129 (183 aa).

The N-terminal stretch at 1 to 19 (MKLLFPIFASLMLQYQVNT) is a signal peptide. 3 disulfide bridges follow: Cys-27/Cys-53, Cys-34/Cys-48, and Cys-38/Cys-54. Residues 141-183 (TATSTKSNTKESRDSATASSPPAPPPPNILPTPSLELEEAEEQ) are disordered. Pro residues predominate over residues 161 to 170 (PPAPPPPNIL).

This sequence belongs to the beta-defensin family.

The protein resides in the secreted. Its function is as follows. Has antibacterial activity. The polypeptide is Beta-defensin 129 (DEFB129) (Gorilla gorilla gorilla (Western lowland gorilla)).